The following is a 367-amino-acid chain: Otolith matrix protein 1 (367 aa).

The first 23 residues, Met-1–Gln-23, serve as a signal peptide directing secretion. The region spanning Ile-27–Cys-363 is the Transferrin-like domain.

Belongs to the transferrin family. As to quaternary structure, interacts with OTOL1. As to expression, expressed in the sacculus during the day.

It localises to the secreted. In terms of biological role, required for normal otolith growth and deposition of otolin-1 in the otolith. The sequence is that of Otolith matrix protein 1 (otomp) from Oncorhynchus mykiss (Rainbow trout).